We begin with the raw amino-acid sequence, 430 residues long: D-galactonate transporter (430 aa).

At 1 to 17 (MDIPVNAAKPGRRRYLT) the chain is on the cytoplasmic side. The helical transmembrane segment at 18–39 (LVMIFITVVICYVDRANLAVAS) threads the bilayer. D-galactonate is bound by residues Tyr-29 and Arg-32. Residues 40–50 (AHIQEEFGITK) lie on the Periplasmic side of the membrane. Residues 51–74 (AEMGYVFSAFAWLYTLCQIPGGWF) traverse the membrane as a helical segment. Tyr-64 is a D-galactonate binding site. The Cytoplasmic portion of the chain corresponds to 75-81 (LDRVGSR). A helical membrane pass occupies residues 82-100 (VTYFIAIFGWSVATLFQGF). Topologically, residues 101 to 103 (ATG) are periplasmic. Residues 104-125 (LMSLIGLRAITGIFEAPAFPTN) traverse the membrane as a helical segment. Residues 126–141 (NRMVTSWFPEHERASA) are Cytoplasmic-facing. A helical transmembrane segment spans residues 142–164 (VGFYTSGQFVGLAFLTPLLIWIQ). Residues 165-168 (EMLS) lie on the Periplasmic side of the membrane. Residues 169-190 (WHWVFIVTGGIGIIWSLIWFKV) form a helical membrane-spanning segment. Topologically, residues 191-241 (YQPPRLTKGISKAELDYIRDGGGLVDGDAPVKKEARQPLTAKDWKLVFHRK) are cytoplasmic. A helical transmembrane segment spans residues 242 to 267 (LIGVYLGQFAVASTLWFFLTWFPNYL). Residues 268-276 (TQEKGITAL) are Periplasmic-facing. The chain crosses the membrane as a helical span at residues 277-297 (KAGFMTTVPFLAAFVGVLLSG). The Cytoplasmic segment spans residues 298–314 (WVADLLVRKGFSLGFAR). Residues 315–333 (KTPIICGLLISTCIMGANY) form a helical membrane-spanning segment. At 334–336 (TND) the chain is on the periplasmic side. Residues 337-354 (PMMIMCLMALAFFGNGFA) traverse the membrane as a helical segment. Over 355–373 (SITWSLVSSLAPMRLIGLT) the chain is Cytoplasmic. Trp-358 provides a ligand contact to D-galactonate. A helical membrane pass occupies residues 374–395 (GGVFNFAGGLGGITVPLVVGYL). The Periplasmic portion of the chain corresponds to 396–400 (AQGYG). A helical transmembrane segment spans residues 401 to 423 (FAPALVYISAVALIGALSYILLV). Residues 424–430 (GDVKRVG) lie on the Cytoplasmic side of the membrane.

It belongs to the major facilitator superfamily. Phthalate permease family.

It localises to the cell inner membrane. It catalyses the reaction D-galactonate(in) + H(+)(in) = D-galactonate(out) + H(+)(out). Functionally, involved in D-galactonate metabolism. Catalyzes the proton-dependent uptake of galactonate into the cell. In Escherichia coli O6:H1 (strain CFT073 / ATCC 700928 / UPEC), this protein is D-galactonate transporter (dgoT).